The chain runs to 90 residues: Iron oxidase (90 aa).

Positions 1–37 (MSEKDKMITRRDALRNIAVVVGSVATTTMMGVGVADA) form a signal peptide, tat-type signal. [4Fe-4S] cluster is bound by residues cysteine 57, cysteine 60, cysteine 69, and cysteine 82.

This sequence belongs to the high-potential iron-sulfur protein (HiPIP) family. As to quaternary structure, homomultimer. In terms of processing, predicted to be exported by the Tat system. The position of the signal peptide cleavage has been experimentally proven.

It is found in the periplasm. Catalyzes the oxidation of Fe(2+) to Fe(3+) coupled to cytochrome c552 reduction. This Acidithiobacillus ferrooxidans (Thiobacillus ferrooxidans) protein is Iron oxidase (iro).